A 273-amino-acid chain; its full sequence is Transposable element Tcb1 transposase (273 aa).

This sequence belongs to the transposase 5 family.

It localises to the nucleus. Probably essential for transposable element Tcb1 transposition. The insertion of Tcb1 is the main cause of spontaneous mutations. The polypeptide is Transposable element Tcb1 transposase (Caenorhabditis briggsae).